The chain runs to 1535 residues: MADDHRQPEASSNTAANPYNHPVASEHTLGSLNTTSTSETDASADADARWGERNQGDPVSRRGAMEEFEEMRREVTKLSLHRTRSAKDARRRSRAEGRDEEKALEDEQASSTDEYRGGFDLNEFLMGGHLERRTTAGEPAKKVGVAFKNVTVKGVETGASFVRTLPDAVVGTFGPDLYKIICRFVPALHFGKRPPVRDLLHDFSGAVREGEMMLVLGRPGAGCSTFLKTIANDREAFAGVEGEVSYGGLSAEEQHKHFRGEVNYNQEDDQHFPNLTVWQTLKFSLINKTKKHDKASIPIIIDALLKMFGITHTKNTLVGNEYVRGVSGGERKRVSIAETLATKSSVVCWDNSTRGLDASTALDYAKSLRIMTDVSKRTTLVTLYQAGESIYELMDKVLVIDAGRMLYQGPANEAKQYFVDLGFYCPEQSTTADFLTSLCDPNARQFQPGREASTPKTAEELEAIFKQSEAYKQIWNEVCAYEKLLQDTNQEDTRRFQKTVAQSKSKTVSKKSPYTVSIVRQVAACVQREFWLLWGDKTSLYTKYFIIVSNGLIVSSLFYGESLDTSGAFSRGGALFFSILFLVLQLTELMPAVSGRGIVARHKDYAFYRPSAVAIARVVVDFPAIFCMVVPFTIIVYFMTGLDVEASKFFIYFLFVYTTTFCITSLYRMFAALSPTIDDAVRFAGIALNVLILFVGYVIPKQGLIDGSIWFGWLFYVNPLSYSYEAVLTNEFSNRVMSCAPSQLVPQGPGVDPRYQGCALTGSELGKADVAGSRYLQESFQFTRHHLWRNFGVVIAFTVLYLLVTVIAAEVLSFVGGGGGALVFKKSKRSTKLKAQNGKGNDEEQVQNTGDNAALSRGEAKSSSSGEAMQRLSASDRVFTWSNVEYTVPYGNGTRKLLNGVNGYAKPGLMIALMGASGAGKTTLLNTLAQRQKMGVVTGDMLVDGHPLGTEFQRGTGFCEQMDLHDNTATIREALEFSAILRQDRNTPRQEKLDYVDQIIDLLELEDIQDAIIGSLNVEQKKRVTIGVELAAKPSLLLFLDEPTSGLDSQAAFSIVRFLKKLSQAGQAILCTIHQPSSMLIQQFDMVLALNPGGNTFYFGPIGPEGRDVIKYFADRGVVCPPSKNVAEFILETAAKATKKDGRAIDWNEEWRNSEQNRRILDEIQQIREERSKIPIADKGVEYEFAAPTWTQTVLLTERLFRQYWRDPSYYYGKLFVSVIIGIFNGFTFWMLDNSISSMQNRMFSIFLIILIPPIVLNSIVPKFYINRALWEAREYPSRIYGWFAFCTANVVCEIPMAIVSALIYWLLWYYPVGFPTDSSSAGYVFLMSMLFFLFQASWGQWICAFAPSFTVISNVLPFFFVMVNLFNGIVRPYKDYPVFWKYWMYYVNPVTWWLRGVISSVFPSVDIECASKEATHFDPPPGSTCQQYAGNFVSNIAGVGYLVNPDATEDCQYCPFANGTEYMHTLNVHDGDKWRCFGIFLAFVIINWALVYFFIYTVRVRGWSFGMGYLFGGVGVMIEGVKKVFSKKSEKEQN.

Residues 1-115 (MADDHRQPEA…DEQASSTDEY (115 aa)) are disordered. Asn33 carries an N-linked (GlcNAc...) asparagine glycan. The segment covering 34–45 (TTSTSETDASAD) has biased composition (low complexity). Basic and acidic residues predominate over residues 46-76 (ADARWGERNQGDPVSRRGAMEEFEEMRREVT). Positions 79 to 93 (SLHRTRSAKDARRRS) are enriched in basic residues. Residues Asn149, Asn274, Asn287, and Asn351 are each glycosylated (N-linked (GlcNAc...) asparagine). The region spanning 185 to 427 (VPALHFGKRP…FVDLGFYCPE (243 aa)) is the ABC transporter 1 domain. 7 helical membrane-spanning segments follow: residues 540-560 (LYTK…LFYG), 573-593 (GALF…MPAV), 618-638 (VVVD…IVYF), 646-666 (ASKF…ITSL), 680-700 (AVRF…YVIP), 703-723 (GLID…LSYS), and 791-811 (FGVV…AAEV). Residues 834–868 (KAQNGKGNDEEQVQNTGDNAALSRGEAKSSSSGEA) form a disordered region. The ABC transporter 2 domain maps to 879–1117 (FTWSNVEYTV…DVIKYFADRG (239 aa)). Residue Asn892 is glycosylated (N-linked (GlcNAc...) asparagine). Residue 915-922 (GASGAGKT) participates in ATP binding. Helical transmembrane passes span 1212–1232 (YGKL…FWML), 1246–1266 (IFLI…KFYI), 1295–1315 (IPMA…PVGF), 1320–1340 (SSAG…ASWG), 1342–1362 (WICA…FFFV), and 1384–1406 (WMYY…FPSV). A glycan (N-linked (GlcNAc...) asparagine) is linked at Asn1459. 2 helical membrane-spanning segments follow: residues 1477 to 1497 (CFGI…FFIY) and 1503 to 1523 (GWSF…EGVK).

It belongs to the ABC transporter superfamily. ABCG family. PDR (TC 3.A.1.205) subfamily.

Its subcellular location is the cell membrane. It carries out the reaction voriconazole(in) + ATP + H2O = voriconazole(out) + ADP + phosphate + H(+). Its function is as follows. Pleiotropic ABC efflux transporter involved in the basal level of azole susceptibility. Confers resistance to voriconazole. This chain is ABC multidrug transporter atrF, found in Aspergillus flavus (strain ATCC 200026 / FGSC A1120 / IAM 13836 / NRRL 3357 / JCM 12722 / SRRC 167).